The chain runs to 842 residues: Follistatin-related protein 4 (842 aa).

The N-terminal stretch at 1 to 22 (MKPGGFWLHLTLLGASLPAALG) is a signal peptide. The Kazal-like domain occupies 81 to 135 (KTGEPECQCLEACRPSYVPVCGSDGRFYENHCKLHRAACLLGKRITVIHSKDCFL). 3 disulfide bridges follow: C87-C119, C93-C112, and C101-C133. The region spanning 174–209 (QKRLLVESLFRDLDADGNGHLSSSELAQHVLKKQDL) is the EF-hand domain. 5 residues coordinate Ca(2+): D187, D189, N191, H193, and E198. Ig-like domains are found at residues 251-338 (PEDR…LQVN) and 341-426 (PVIR…EDIS). Cystine bridges form between C270-C321 and C362-C413. An N-linked (GlcNAc...) asparagine glycan is attached at N318.

It is found in the secreted. This Homo sapiens (Human) protein is Follistatin-related protein 4 (FSTL4).